We begin with the raw amino-acid sequence, 299 residues long: Hemolysin C homolog (299 aa).

CBS domains lie at Met80 to Leu142 and Leu145 to Glu202.

Belongs to the UPF0053 family. Hemolysin C subfamily.

The polypeptide is Hemolysin C homolog (tlyC) (Rickettsia rickettsii (strain Sheila Smith)).